Here is a 535-residue protein sequence, read N- to C-terminus: Serine/threonine-protein kinase C (535 aa).

Positions 12 to 277 (YRIIETLGRG…AMAQTLQGNF (266 aa)) constitute a Protein kinase domain. Residues 18-26 (LGRGGFGET) and Lys43 contribute to the ATP site. Asp142 serves as the catalytic Proton acceptor. Residues 371–535 (NNPPPAVEEP…GEKPIDPEQN (165 aa)) form a disordered region. A compositionally biased stretch (pro residues) spans 402–421 (SPIPTPATPSPEPTPSPSPS). Residues 422-435 (PETTSSPTEDTITP) show a composition bias toward low complexity. Composition is skewed to pro residues over residues 446–464 (APIPEPKPSPSPTISPQPS) and 472–498 (TPAPVPKPSPSPTPKPTVPPQISPTPQ).

Belongs to the protein kinase superfamily. Ser/Thr protein kinase family.

The catalysed reaction is L-seryl-[protein] + ATP = O-phospho-L-seryl-[protein] + ADP + H(+). The enzyme catalyses L-threonyl-[protein] + ATP = O-phospho-L-threonyl-[protein] + ADP + H(+). In Synechocystis sp. (strain ATCC 27184 / PCC 6803 / Kazusa), this protein is Serine/threonine-protein kinase C (spkC).